A 327-amino-acid polypeptide reads, in one-letter code: Apoptosis facilitator Bcl-2-like protein 14 (327 aa).

S44 carries the phosphoserine modification. Residues 212-226 (IVELLKYSGDQLERK) carry the BH3 motif. The BH2 signature appears at 308-315 (WIQQHGGW).

It belongs to the Bcl-2 family. In terms of processing, phosphorylated by MELK, leading to inhibit its pro-apoptotic function. In terms of tissue distribution, isoform 1 is widely expressed. Isoform 2 is testis-specific.

The protein resides in the cytoplasm. It is found in the cytosol. It localises to the endomembrane system. Functionally, plays a role in apoptosis. In Homo sapiens (Human), this protein is Apoptosis facilitator Bcl-2-like protein 14 (BCL2L14).